Here is a 118-residue protein sequence, read N- to C-terminus: NADH-ubiquinone oxidoreductase chain 3 (118 aa).

The next 3 helical transmembrane spans lie at 9 to 29 (IYLV…FLFA), 62 to 82 (LVSI…PWAV), and 87 to 107 (IDLF…IGSL).

This sequence belongs to the complex I subunit 3 family.

It localises to the mitochondrion membrane. The enzyme catalyses a ubiquinone + NADH + 5 H(+)(in) = a ubiquinol + NAD(+) + 4 H(+)(out). In terms of biological role, core subunit of the mitochondrial membrane respiratory chain NADH dehydrogenase (Complex I) that is believed to belong to the minimal assembly required for catalysis. Complex I functions in the transfer of electrons from NADH to the respiratory chain. The immediate electron acceptor for the enzyme is believed to be ubiquinone. This is NADH-ubiquinone oxidoreductase chain 3 (ND3) from Zea mays (Maize).